A 126-amino-acid chain; its full sequence is Large ribosomal subunit protein bL17 (126 aa).

This sequence belongs to the bacterial ribosomal protein bL17 family. Part of the 50S ribosomal subunit. Contacts protein L32.

The protein is Large ribosomal subunit protein bL17 of Aliivibrio fischeri (strain ATCC 700601 / ES114) (Vibrio fischeri).